The primary structure comprises 469 residues: Sulfate adenylyltransferase subunit 1 (469 aa).

One can recognise a tr-type G domain in the interval lysine 22 to glutamate 237. Residues glycine 31–serine 38 are G1. Glycine 31 to serine 38 contacts GTP. Residues glycine 89 to aspartate 93 are G2. A G3 region spans residues aspartate 110–glycine 113. Residues aspartate 110–histidine 114 and asparagine 165–aspartate 168 each bind GTP. The segment at asparagine 165–aspartate 168 is G4. Residues serine 202–lysine 204 form a G5 region.

This sequence belongs to the TRAFAC class translation factor GTPase superfamily. Classic translation factor GTPase family. CysN/NodQ subfamily. In terms of assembly, heterodimer composed of CysD, the smaller subunit, and CysN.

The enzyme catalyses sulfate + ATP + H(+) = adenosine 5'-phosphosulfate + diphosphate. It functions in the pathway sulfur metabolism; hydrogen sulfide biosynthesis; sulfite from sulfate: step 1/3. In terms of biological role, with CysD forms the ATP sulfurylase (ATPS) that catalyzes the adenylation of sulfate producing adenosine 5'-phosphosulfate (APS) and diphosphate, the first enzymatic step in sulfur assimilation pathway. APS synthesis involves the formation of a high-energy phosphoric-sulfuric acid anhydride bond driven by GTP hydrolysis by CysN coupled to ATP hydrolysis by CysD. This chain is Sulfate adenylyltransferase subunit 1, found in Methylorubrum extorquens (strain CM4 / NCIMB 13688) (Methylobacterium extorquens).